A 357-amino-acid chain; its full sequence is Guanine nucleotide-binding protein alpha-16 subunit (357 aa).

Glycine 2 carries the N-myristoyl glycine lipid modification. Cysteine 3 is lipidated: S-palmitoyl cysteine. A G-alpha domain is found at 32-357 (RTIKLLLLGA…RDNLRTCGLY (326 aa)). Residues 35 to 48 (KLLLLGAGESGKST) are G1 motif. GTP is bound by residues 40–47 (GAGESGKS), 175–181 (LRTRIKT), 200–204 (DVGGQ), 269–272 (NKKD), and alanine 329. Mg(2+) contacts are provided by serine 47 and threonine 181. Positions 173 to 181 (DILRTRIKT) are G2 motif. The G3 motif stretch occupies residues 196-205 (FLVFDVGGQR). The tract at residues 265–272 (ILFLNKKD) is G4 motif. The G5 motif stretch occupies residues 327-332 (TCATDT).

The protein belongs to the G-alpha family. As to quaternary structure, g proteins are composed of 3 units; alpha, beta and gamma. The alpha chain contains the guanine nucleotide binding site.

Guanine nucleotide-binding proteins (G proteins) are involved as modulators or transducers in various transmembrane signaling systems. In the 1-cell embryo, probably together with goa-1, controls nuclear rotation and spindle elongation during mitosis. During the first embryonic cell divisons, plays a role in gpr-1/2 cortical localization and in the proper orientation of EMS blastomere mitotic spindle. This is Guanine nucleotide-binding protein alpha-16 subunit (gpa-16) from Caenorhabditis elegans.